Here is a 358-residue protein sequence, read N- to C-terminus: NADH-quinone oxidoreductase subunit H (358 aa).

Transmembrane regions (helical) follow at residues 20-40, 95-115, 128-148, 168-188, 206-226, 253-273, 295-315, and 334-354; these read ITVG…IPLI, ALFY…WAVI, IGLL…IIAG, ISYE…SGSM, VFSW…ISAV, GFAF…IAAL, TPSA…YLWI, and VLIP…ISPL.

Belongs to the complex I subunit 1 family. In terms of assembly, NDH-1 is composed of 14 different subunits. Subunits NuoA, H, J, K, L, M, N constitute the membrane sector of the complex.

It is found in the cell inner membrane. The catalysed reaction is a quinone + NADH + 5 H(+)(in) = a quinol + NAD(+) + 4 H(+)(out). NDH-1 shuttles electrons from NADH, via FMN and iron-sulfur (Fe-S) centers, to quinones in the respiratory chain. The immediate electron acceptor for the enzyme in this species is believed to be ubiquinone. Couples the redox reaction to proton translocation (for every two electrons transferred, four hydrogen ions are translocated across the cytoplasmic membrane), and thus conserves the redox energy in a proton gradient. This subunit may bind ubiquinone. The chain is NADH-quinone oxidoreductase subunit H from Neisseria gonorrhoeae (strain ATCC 700825 / FA 1090).